The chain runs to 195 residues: Coiled-coil domain-containing protein 184 (195 aa).

A coiled-coil region spans residues 39 to 68 (GMKELMEHLKAQLQALFEDVRAMRGALDEQ). The segment at 98–175 (RQGGLGVVGN…AGLLGGDGPL (78 aa)) is disordered. Residues 135-146 (PEDEEDDDEEEK) show a composition bias toward acidic residues.

The polypeptide is Coiled-coil domain-containing protein 184 (CCDC184) (Bos taurus (Bovine)).